Consider the following 724-residue polypeptide: Peroxidase mlt-7 (724 aa).

The first 24 residues, 1-24 (MRRLHRNLSLLFLICILNEYRIES), serve as a signal peptide directing secretion. N7 is a glycosylation site (N-linked (GlcNAc...) asparagine). Residues 25–178 (QTLSPPITDR…GCVPQLSDVG (154 aa)) constitute a propeptide that is removed on maturation. The ShKT domain maps to 42 to 76 (CCDHHEWCRFWASIGECNANKDWMTENCQLACGTC). A disulfide bond links C181 and C198. N-linked (GlcNAc...) asparagine glycosylation occurs at N233. H271 acts as the Proton acceptor in catalysis. D272 is a Ca(2+) binding site. The cysteines at positions 284 and 294 are disulfide-linked. The Ca(2+) site is built by T335, Y337, D339, and S341. H493 is a binding site for heme b. 2 N-linked (GlcNAc...) asparagine glycosylation sites follow: N509 and N617. 2 disulfides stabilise this stretch: C588–C645 and C686–C710.

Belongs to the peroxidase family. Heme b serves as cofactor. Expressed in the hypodermal cells, specifically the head and seam/body.

The enzyme catalyses 2 a phenolic donor + H2O2 = 2 a phenolic radical donor + 2 H2O. In terms of biological role, plays an essential role in cuticle biogenesis. Required in combination with bli-3 for correct formation of cross-links in cuticle collagens. The sequence is that of Peroxidase mlt-7 from Caenorhabditis elegans.